A 177-amino-acid chain; its full sequence is Ecotin (177 aa).

Positions 1-23 are cleaved as a signal peptide; sequence MQASIQNRIFFGLVVLWSTTVLE. The cysteines at positions 83 and 122 are disulfide-linked.

It belongs to the protease inhibitor I11 (ecotin) family. Homodimer.

It is found in the periplasm. Functionally, general inhibitor of family S1 serine proteases. The protein is Ecotin of Prochlorococcus marinus (strain MIT 9313).